Consider the following 233-residue polypeptide: MLIPIPALNDNYIWVYKRENLSVIVIDIPEIAALSQFIQAQNLVIGALLITHNHRDHIGALAEFKQFYPHVHIYGPAECADQGVTQVIDAGRLIIDEYHIDVLPTGGHTAQHLSFLVDGHLFCGDTLFSAGCGRVFTGDYSQMFTSLQLLKSLPDETIVCPAHEYTLGNLAFALTTGKNKSAVQKQLEKVKKLRAENNPSLPTTLALEKQINPFLQVEGLEEFIELRKAKDMF.

Positions 52, 54, 56, 57, 108, 125, and 163 each coordinate Zn(2+).

Belongs to the metallo-beta-lactamase superfamily. Glyoxalase II family. In terms of assembly, monomer. Zn(2+) is required as a cofactor.

The enzyme catalyses an S-(2-hydroxyacyl)glutathione + H2O = a 2-hydroxy carboxylate + glutathione + H(+). It functions in the pathway secondary metabolite metabolism; methylglyoxal degradation; (R)-lactate from methylglyoxal: step 2/2. In terms of biological role, thiolesterase that catalyzes the hydrolysis of S-D-lactoyl-glutathione to form glutathione and D-lactic acid. This chain is Hydroxyacylglutathione hydrolase, found in Histophilus somni (strain 2336) (Haemophilus somnus).